A 319-amino-acid chain; its full sequence is NADH-cytochrome b5 reductase 2 (319 aa).

Residues 30–46 (LAPVYLTVGLAGLGVGL) traverse the membrane as a helical segment. An FAD-binding FR-type domain is found at 69-173 (QGWVDLKLSE…KGPLPKYPWE (105 aa)). 176 to 211 (KHQHICLIAGGTGITPMYQLARHIFKNPEDKTKVTL) contributes to the FAD binding site.

The protein belongs to the flavoprotein pyridine nucleotide cytochrome reductase family. FAD serves as cofactor.

The protein resides in the mitochondrion outer membrane. It carries out the reaction 2 Fe(III)-[cytochrome b5] + NADH = 2 Fe(II)-[cytochrome b5] + NAD(+) + H(+). May mediate the reduction of outer membrane cytochrome b5. The protein is NADH-cytochrome b5 reductase 2 (mcr1) of Aspergillus terreus (strain NIH 2624 / FGSC A1156).